A 456-amino-acid polypeptide reads, in one-letter code: Palmitoyltransferase PFA4 (456 aa).

Topologically, residues 1-9 (MAARNWSRV) are cytoplasmic. Residues 10 to 30 (WVGGTVILISFIAFSSQIFVI) form a helical membrane-spanning segment. Over 31 to 37 (WPWYGRE) the chain is Lumenal. Residues 38 to 58 (ISLDLLMLLVPLNLAAFMIFW) form a helical membrane-spanning segment. The Cytoplasmic portion of the chain corresponds to 59-138 (NYRLCVITSP…GNCVGFYNQG (80 aa)). Residues 95–145 (RYCKNCAHYKPPRAHHCRQCKTCWLKLDHHCPWIGNCVGFYNQGHFIRFLL) enclose the DHHC domain. C125 acts as the S-palmitoyl cysteine intermediate in catalysis. A helical membrane pass occupies residues 139-159 (HFIRFLLWVDIGTTFHLIIMV). Topologically, residues 160 to 176 (RRVLYIAEYYHEPTLAD) are lumenal. Residues 177 to 197 (VLFLVFNFATCVPVWLCVGMF) traverse the membrane as a helical segment. Residues 198–456 (SIYHVYLACG…DPEEESGYTH (259 aa)) are Cytoplasmic-facing. A disordered region spans residues 284–377 (PPQDPSRLPN…YDHYDEGPMY (94 aa)). Residues 285 to 298 (PQDPSRLPNPPPIP) are compositionally biased toward pro residues. Residues 309-321 (NGFNPNLRPTNSL) are compositionally biased toward polar residues. The span at 337-352 (SHEQGRHYSSGDERDN) shows a compositional bias: basic and acidic residues.

Belongs to the DHHC palmitoyltransferase family. PFA4 subfamily.

Its subcellular location is the endoplasmic reticulum membrane. It catalyses the reaction L-cysteinyl-[protein] + hexadecanoyl-CoA = S-hexadecanoyl-L-cysteinyl-[protein] + CoA. Functionally, mediates the reversible addition of palmitate to target proteins, thereby regulating their membrane association and biological function. Responsible for the modification of a subset of proteins that are critical in cryptococcal pathogenesis, with substrates involved in cell wall synthesis, signal transduction, and membrane trafficking. Palmitoylates chitin synthase CHS3. The polypeptide is Palmitoyltransferase PFA4 (Cryptococcus neoformans var. grubii serotype A (strain H99 / ATCC 208821 / CBS 10515 / FGSC 9487) (Filobasidiella neoformans var. grubii)).